The following is a 198-amino-acid chain: Recombination protein RecR (198 aa).

Residues 57 to 72 (CSICGHITDQDPCYIC) form a C4-type zinc finger. The Toprim domain maps to 80 to 175 (SVICVVQDPK…KLSRIAHGLP (96 aa)).

It belongs to the RecR family.

Its function is as follows. May play a role in DNA repair. It seems to be involved in an RecBC-independent recombinational process of DNA repair. It may act with RecF and RecO. This chain is Recombination protein RecR, found in Bacillus velezensis (strain DSM 23117 / BGSC 10A6 / LMG 26770 / FZB42) (Bacillus amyloliquefaciens subsp. plantarum).